Consider the following 305-residue polypeptide: ATP synthase gamma chain (305 aa).

It belongs to the ATPase gamma chain family. In terms of assembly, F-type ATPases have 2 components, CF(1) - the catalytic core - and CF(0) - the membrane proton channel. CF(1) has five subunits: alpha(3), beta(3), gamma(1), delta(1), epsilon(1). CF(0) has three main subunits: a, b and c.

Its subcellular location is the cell membrane. Produces ATP from ADP in the presence of a proton gradient across the membrane. The gamma chain is believed to be important in regulating ATPase activity and the flow of protons through the CF(0) complex. The chain is ATP synthase gamma chain from Streptomyces coelicolor (strain ATCC BAA-471 / A3(2) / M145).